Reading from the N-terminus, the 498-residue chain is ATP synthase subunit beta, chloroplastic (498 aa).

Thr6 bears the Phosphothreonine mark. At Ser13 the chain carries Phosphoserine. 172–179 (GGAGVGKT) serves as a coordination point for ATP.

Belongs to the ATPase alpha/beta chains family. F-type ATPases have 2 components, CF(1) - the catalytic core - and CF(0) - the membrane proton channel. CF(1) has five subunits: alpha(3), beta(3), gamma(1), delta(1), epsilon(1). CF(0) has four main subunits: a(1), b(1), b'(1) and c(9-12).

Its subcellular location is the plastid. The protein localises to the chloroplast thylakoid membrane. It carries out the reaction ATP + H2O + 4 H(+)(in) = ADP + phosphate + 5 H(+)(out). Produces ATP from ADP in the presence of a proton gradient across the membrane. The catalytic sites are hosted primarily by the beta subunits. This chain is ATP synthase subunit beta, chloroplastic, found in Draba nemorosa (Woodland whitlowgrass).